The chain runs to 615 residues: Dihydroxy-acid dehydratase (615 aa).

Asp-83 contacts Mg(2+). A [2Fe-2S] cluster-binding site is contributed by Cys-124. The Mg(2+) site is built by Asp-125 and Lys-126. The residue at position 126 (Lys-126) is an N6-carboxylysine. Position 199 (Cys-199) interacts with [2Fe-2S] cluster. Glu-495 is a Mg(2+) binding site. The active-site Proton acceptor is the Ser-521.

It belongs to the IlvD/Edd family. Homodimer. The cofactor is [2Fe-2S] cluster. Mg(2+) serves as cofactor.

It catalyses the reaction (2R)-2,3-dihydroxy-3-methylbutanoate = 3-methyl-2-oxobutanoate + H2O. It carries out the reaction (2R,3R)-2,3-dihydroxy-3-methylpentanoate = (S)-3-methyl-2-oxopentanoate + H2O. The protein operates within amino-acid biosynthesis; L-isoleucine biosynthesis; L-isoleucine from 2-oxobutanoate: step 3/4. It functions in the pathway amino-acid biosynthesis; L-valine biosynthesis; L-valine from pyruvate: step 3/4. Functions in the biosynthesis of branched-chain amino acids. Catalyzes the dehydration of (2R,3R)-2,3-dihydroxy-3-methylpentanoate (2,3-dihydroxy-3-methylvalerate) into 2-oxo-3-methylpentanoate (2-oxo-3-methylvalerate) and of (2R)-2,3-dihydroxy-3-methylbutanoate (2,3-dihydroxyisovalerate) into 2-oxo-3-methylbutanoate (2-oxoisovalerate), the penultimate precursor to L-isoleucine and L-valine, respectively. This chain is Dihydroxy-acid dehydratase, found in Corynebacterium jeikeium (strain K411).